The following is a 356-amino-acid chain: Glutamine synthetase nodule isozyme (356 aa).

The GS beta-grasp domain occupies 19–99; that stretch reads IIAEYIWIGG…VMCDAYTPAG (81 aa). The segment at 41–66 is disordered; it reads PGPVSDPSKLPKWNYDGSSTGQAPGE. Positions 106 to 356 constitute a GS catalytic domain; it reads KRHNAAKIFS…IADTTILWKP (251 aa).

It belongs to the glutamine synthetase family. In terms of assembly, homooctamer.

It is found in the cytoplasm. The catalysed reaction is L-glutamate + NH4(+) + ATP = L-glutamine + ADP + phosphate + H(+). In Vigna aconitifolia (Moth bean), this protein is Glutamine synthetase nodule isozyme.